The primary structure comprises 204 residues: Glycerol-3-phosphate acyltransferase (204 aa).

A run of 5 helical transmembrane segments spans residues 8 to 28 (ILIF…CYIF), 53 to 73 (VPAA…VVIA), 81 to 101 (FITA…IFFG), 116 to 136 (FGFS…VAII), and 155 to 175 (VIFT…IIIL).

Belongs to the PlsY family. As to quaternary structure, probably interacts with PlsX.

It localises to the cell inner membrane. It catalyses the reaction an acyl phosphate + sn-glycerol 3-phosphate = a 1-acyl-sn-glycero-3-phosphate + phosphate. The protein operates within lipid metabolism; phospholipid metabolism. Catalyzes the transfer of an acyl group from acyl-phosphate (acyl-PO(4)) to glycerol-3-phosphate (G3P) to form lysophosphatidic acid (LPA). This enzyme utilizes acyl-phosphate as fatty acyl donor, but not acyl-CoA or acyl-ACP. The chain is Glycerol-3-phosphate acyltransferase from Francisella tularensis subsp. holarctica (strain FTNF002-00 / FTA).